A 183-amino-acid chain; its full sequence is A-type ATP synthase subunit E (183 aa).

Belongs to the V-ATPase E subunit family. In terms of assembly, has multiple subunits with at least A(3), B(3), C, D, E, F, H, I and proteolipid K(x).

The protein localises to the cell membrane. Functionally, component of the A-type ATP synthase that produces ATP from ADP in the presence of a proton gradient across the membrane. The protein is A-type ATP synthase subunit E of Methanococcoides burtonii (strain DSM 6242 / NBRC 107633 / OCM 468 / ACE-M).